The chain runs to 180 residues: MSRLKKLYTEEIRKSLQEKFGYGNTMQIPVLRKIVISMGLAEAAKDKNLFQAHLEELSMISGQKPLVTKARNSIAGFKLREGQGIGAKVTLRGQRMYDFMDRFCNIVSPRIRDFRGFSMKGDGRGCYSLGLDDQQIFPEIDLDRVKRTQGMNITWVTTAQTDVECTTLLELMGLRFKKAQ.

This sequence belongs to the universal ribosomal protein uL5 family. Part of the 50S ribosomal subunit; part of the 5S rRNA/L5/L18/L25 subcomplex. Contacts the 5S rRNA and the P site tRNA. Forms a bridge to the 30S subunit in the 70S ribosome.

Its function is as follows. This is one of the proteins that bind and probably mediate the attachment of the 5S RNA into the large ribosomal subunit, where it forms part of the central protuberance. In the 70S ribosome it contacts protein S13 of the 30S subunit (bridge B1b), connecting the 2 subunits; this bridge is implicated in subunit movement. Contacts the P site tRNA; the 5S rRNA and some of its associated proteins might help stabilize positioning of ribosome-bound tRNAs. In Chlamydia caviae (strain ATCC VR-813 / DSM 19441 / 03DC25 / GPIC) (Chlamydophila caviae), this protein is Large ribosomal subunit protein uL5.